The following is a 66-amino-acid chain: Large ribosomal subunit protein uL29 (66 aa).

It belongs to the universal ribosomal protein uL29 family.

The chain is Large ribosomal subunit protein uL29 from Thermococcus gammatolerans (strain DSM 15229 / JCM 11827 / EJ3).